Here is a 168-residue protein sequence, read N- to C-terminus: 6-pyruvoyl tetrahydrobiopterin synthase (168 aa).

H19 contacts Zn(2+). Catalysis depends on C38, which acts as the Proton acceptor. Zn(2+)-binding residues include H44 and H46. Residues H85 and E130 each act as charge relay system in the active site. A Phosphoserine modification is found at S159. Residue T161 is modified to Phosphothreonine. S164, S165, and S167 each carry phosphoserine.

Belongs to the PTPS family. In terms of assembly, homohexamer formed of two homotrimers in a head to head fashion. The cofactor is Zn(2+).

It catalyses the reaction 7,8-dihydroneopterin 3'-triphosphate = 6-pyruvoyl-5,6,7,8-tetrahydropterin + triphosphate + H(+). Its pathway is cofactor biosynthesis; tetrahydrobiopterin biosynthesis; tetrahydrobiopterin from 7,8-dihydroneopterin triphosphate: step 1/3. Functionally, required for pigment and biopterin synthesis. The polypeptide is 6-pyruvoyl tetrahydrobiopterin synthase (pr) (Drosophila melanogaster (Fruit fly)).